The following is a 255-amino-acid chain: MLKIGDKEFKSRLFTGTGKFSNSHLMAEAIQVSGSQLATMALKRVDVHDQQDDILQPLIHAGVNLLPNTSGAKNAKDAVFAAQLAREALGTNWVKLEIHPDPKYLMPDPIETLAAAEQLVRDGFIVLPYCHADPVLCKRLEEVGCAAVMPLGAPIGSNKGIASHDFLEIIIDQANVPVVVDAGIGAPSHAARAMEMGADAVLVNTAIAAASNPVAMAKAFKMAVESGRMAYKAGLAGKVSHAVASSPLTAFLDEL.

The Schiff-base intermediate with DXP role is filled by K95. 1-deoxy-D-xylulose 5-phosphate contacts are provided by residues G156, 182–183 (AG), and 204–205 (NT).

This sequence belongs to the ThiG family. As to quaternary structure, homotetramer. Forms heterodimers with either ThiH or ThiS.

The protein localises to the cytoplasm. It catalyses the reaction [ThiS sulfur-carrier protein]-C-terminal-Gly-aminoethanethioate + 2-iminoacetate + 1-deoxy-D-xylulose 5-phosphate = [ThiS sulfur-carrier protein]-C-terminal Gly-Gly + 2-[(2R,5Z)-2-carboxy-4-methylthiazol-5(2H)-ylidene]ethyl phosphate + 2 H2O + H(+). It functions in the pathway cofactor biosynthesis; thiamine diphosphate biosynthesis. Catalyzes the rearrangement of 1-deoxy-D-xylulose 5-phosphate (DXP) to produce the thiazole phosphate moiety of thiamine. Sulfur is provided by the thiocarboxylate moiety of the carrier protein ThiS. In vitro, sulfur can be provided by H(2)S. This is Thiazole synthase from Vibrio parahaemolyticus serotype O3:K6 (strain RIMD 2210633).